The primary structure comprises 332 residues: Fe(3+) dicitrate transport system permease protein FecC (332 aa).

The Cytoplasmic portion of the chain corresponds to 1-7 (MTAIKHP). Residues 8–28 (VLLWGLPVAALIIIFWLSLFC) form a helical membrane-spanning segment. The Periplasmic portion of the chain corresponds to 29–64 (YSAIPVSGADATRALLPGHTPTLPEALVQNLRLPRS). Residues 65-85 (LVAVLIGASLALAGTLLQTLT) traverse the membrane as a helical segment. The Cytoplasmic portion of the chain corresponds to 86 to 100 (HNPMASPSLLGINSG). The chain crosses the membrane as a helical span at residues 101-121 (AALAMALTSALSPTPIAGYSL). Position 122 (Ser-122) is a topological domain, periplasmic. Residues 123-143 (FIAACGGGVSWLLVMTAGGGF) form a helical membrane-spanning segment. Over 144–151 (RHTHDRNK) the chain is Cytoplasmic. A helical membrane pass occupies residues 152 to 172 (LILAGIALSAFCMGLTRITLL). The Periplasmic segment spans residues 173-199 (LAEDHAYGIFYWLAGGVSHARWQDVWQ). Residues 200-220 (LLPVVVTAVPVVLLLANQLNL) traverse the membrane as a helical segment. The Cytoplasmic portion of the chain corresponds to 221 to 244 (LNLSDSTAHTLGVNLTRLRLVINM). Residues 245-265 (LVLLLVGACVSVAGPVAFIGL) traverse the membrane as a helical segment. The Periplasmic portion of the chain corresponds to 266–307 (LVPHLARFWAGFDQRNVLPVSMLLGATLMLLADVLARALAFP). Residues 308-328 (GDLPAGAVLALIGSPCFVWLV) traverse the membrane as a helical segment. Residues 329-332 (RRRG) are Cytoplasmic-facing.

Belongs to the binding-protein-dependent transport system permease family. FecCD subfamily. In terms of assembly, the complex is composed of two ATP-binding proteins (FecE), two transmembrane proteins (FecC and FecD) and a solute-binding protein (FecB). Interacts with FecB.

Its subcellular location is the cell inner membrane. Its function is as follows. Part of the ABC transporter complex FecBCDE involved in citrate-dependent Fe(3+) uptake. Probably responsible for the translocation of the substrate across the membrane. This is Fe(3+) dicitrate transport system permease protein FecC from Escherichia coli (strain K12).